A 379-amino-acid chain; its full sequence is DNA replication and repair protein RecF (379 aa).

30–37 (GDNAQGKS) contacts ATP.

It belongs to the RecF family.

The protein resides in the cytoplasm. In terms of biological role, the RecF protein is involved in DNA metabolism; it is required for DNA replication and normal SOS inducibility. RecF binds preferentially to single-stranded, linear DNA. It also seems to bind ATP. This chain is DNA replication and repair protein RecF, found in Thermosynechococcus vestitus (strain NIES-2133 / IAM M-273 / BP-1).